Reading from the N-terminus, the 82-residue chain is UPF0335 protein pRhico085 (82 aa).

Belongs to the UPF0335 family.

The protein is UPF0335 protein pRhico085 of Azospirillum brasilense.